The chain runs to 204 residues: Large ribosomal subunit protein uL4 (204 aa).

The interval 52–76 (AEVRGGGKKPWAQKGGGRARAGSRR) is disordered.

Belongs to the universal ribosomal protein uL4 family. Part of the 50S ribosomal subunit.

Functionally, one of the primary rRNA binding proteins, this protein initially binds near the 5'-end of the 23S rRNA. It is important during the early stages of 50S assembly. It makes multiple contacts with different domains of the 23S rRNA in the assembled 50S subunit and ribosome. Its function is as follows. Forms part of the polypeptide exit tunnel. The polypeptide is Large ribosomal subunit protein uL4 (Sulfurimonas denitrificans (strain ATCC 33889 / DSM 1251) (Thiomicrospira denitrificans (strain ATCC 33889 / DSM 1251))).